The chain runs to 368 residues: tRNA-specific 2-thiouridylase MnmA (368 aa).

ATP is bound by residues 11–18 (GMSGGVDS) and M37. Residues 97 to 99 (NPD) are interaction with target base in tRNA. Residue C102 is the Nucleophile of the active site. C102 and C199 form a disulfide bridge. Position 127 (G127) interacts with ATP. Positions 149–151 (KDQ) are interaction with tRNA. C199 acts as the Cysteine persulfide intermediate in catalysis. An interaction with tRNA region spans residues 311–312 (RY).

The protein belongs to the MnmA/TRMU family. Interacts with TusE.

It is found in the cytoplasm. It catalyses the reaction S-sulfanyl-L-cysteinyl-[protein] + uridine(34) in tRNA + AH2 + ATP = 2-thiouridine(34) in tRNA + L-cysteinyl-[protein] + A + AMP + diphosphate + H(+). Functionally, catalyzes the 2-thiolation of uridine at the wobble position (U34) of tRNA(Lys), tRNA(Glu) and tRNA(Gln), leading to the formation of s(2)U34, the first step of tRNA-mnm(5)s(2)U34 synthesis. Sulfur is provided by IscS, via a sulfur-relay system. Binds ATP and its substrate tRNAs. The sequence is that of tRNA-specific 2-thiouridylase MnmA from Shigella flexneri serotype 5b (strain 8401).